Reading from the N-terminus, the 224-residue chain is Large ribosomal subunit protein uL4 (224 aa).

The tract at residues 52 to 109 (AAARQGTHSTKTRGDVSGGGRKPYRQKGTGRARQGSTRTPQFTGGGVVHGPKPRDYSQ) is disordered.

The protein belongs to the universal ribosomal protein uL4 family. As to quaternary structure, part of the 50S ribosomal subunit.

In terms of biological role, one of the primary rRNA binding proteins, this protein initially binds near the 5'-end of the 23S rRNA. It is important during the early stages of 50S assembly. It makes multiple contacts with different domains of the 23S rRNA in the assembled 50S subunit and ribosome. Forms part of the polypeptide exit tunnel. The sequence is that of Large ribosomal subunit protein uL4 from Mycobacterium ulcerans (strain Agy99).